We begin with the raw amino-acid sequence, 52 residues long: uncharacterized protein (52 aa).

The interval 1–52 (MVNNDAKIGRREFYDRVESVRPKSPPRERPTYTYSNSRTVDGYSNRGPRADF) is disordered. Positions 7–30 (KIGRREFYDRVESVRPKSPPRERP) are enriched in basic and acidic residues.

This is an uncharacterized protein from Dictyostelium discoideum (Social amoeba).